The following is a 479-amino-acid chain: Chromosomal replication initiator protein DnaA (479 aa).

A domain I, interacts with DnaA modulators region spans residues 1–74 (MFSGVVMAWQ…RSLTGVDSSI (74 aa)). The tract at residues 74 to 142 (ITDVRFLEKK…SVPKNNASIR (69 aa)) is domain II. The segment at 143-360 (ALHPRYTFDE…SAITAIGARA (218 aa)) is domain III, AAA+ region. The ATP site is built by glycine 187, glycine 189, lysine 190, and serine 191. The interval 361-479 (RLMGGYIDMN…NLLSDKVKQI (119 aa)) is domain IV, binds dsDNA.

The protein belongs to the DnaA family. As to quaternary structure, oligomerizes as a right-handed, spiral filament on DNA at oriC.

Its subcellular location is the cytoplasm. Its function is as follows. Plays an essential role in the initiation and regulation of chromosomal replication. ATP-DnaA binds to the origin of replication (oriC) to initiate formation of the DNA replication initiation complex once per cell cycle. Binds the DnaA box (a 9 base pair repeat at the origin) and separates the double-stranded (ds)DNA. Forms a right-handed helical filament on oriC DNA; dsDNA binds to the exterior of the filament while single-stranded (ss)DNA is stabiized in the filament's interior. The ATP-DnaA-oriC complex binds and stabilizes one strand of the AT-rich DNA unwinding element (DUE), permitting loading of DNA polymerase. After initiation quickly degrades to an ADP-DnaA complex that is not apt for DNA replication. Binds acidic phospholipids. This chain is Chromosomal replication initiator protein DnaA, found in Desulfotalea psychrophila (strain LSv54 / DSM 12343).